We begin with the raw amino-acid sequence, 160 residues long: Growth arrest and DNA damage-inducible protein GADD45 beta (160 aa).

It belongs to the GADD45 family. As to quaternary structure, interacts with GADD45GIP1.

In terms of biological role, involved in the regulation of growth and apoptosis. Mediates activation of stress-responsive MTK1/MEKK4 MAPKKK. In Bos taurus (Bovine), this protein is Growth arrest and DNA damage-inducible protein GADD45 beta (GADD45B).